The following is a 510-amino-acid chain: NAD(P)H-quinone oxidoreductase subunit 2 A, chloroplastic (510 aa).

A run of 13 helical transmembrane segments spans residues 24–44 (LLLF…GLIL), 57–77 (IPWL…ALLF), 99–119 (IFQF…VEYI), 124–144 (MAIT…MFLC), 149–169 (LITI…LSGY), 183–203 (YLLM…WLYG), 227–247 (PGIS…LSLA), 295–315 (WHLL…LIAI), 323–343 (MLAY…IVGD), 354–374 (YMLF…SFGL), 395–415 (ALSL…AGFF), 418–438 (LHLF…IGLL), and 484–504 (MIVC…IIAI).

This sequence belongs to the complex I subunit 2 family. NDH is composed of at least 16 different subunits, 5 of which are encoded in the nucleus.

It is found in the plastid. The protein resides in the chloroplast thylakoid membrane. It catalyses the reaction a plastoquinone + NADH + (n+1) H(+)(in) = a plastoquinol + NAD(+) + n H(+)(out). The catalysed reaction is a plastoquinone + NADPH + (n+1) H(+)(in) = a plastoquinol + NADP(+) + n H(+)(out). Functionally, NDH shuttles electrons from NAD(P)H:plastoquinone, via FMN and iron-sulfur (Fe-S) centers, to quinones in the photosynthetic chain and possibly in a chloroplast respiratory chain. The immediate electron acceptor for the enzyme in this species is believed to be plastoquinone. Couples the redox reaction to proton translocation, and thus conserves the redox energy in a proton gradient. This Ranunculus macranthus (Large buttercup) protein is NAD(P)H-quinone oxidoreductase subunit 2 A, chloroplastic.